Here is a 223-residue protein sequence, read N- to C-terminus: CKLF-like MARVEL transmembrane domain-containing protein 5 (223 aa).

An MARVEL domain is found at 29–213 (FLTSHKGILL…DAFKIYRTEM (185 aa)). A run of 4 helical transmembrane segments spans residues 35 to 55 (GILL…FTAS), 56 to 76 (ISAY…FLFL), 162 to 182 (FLRC…AVTS), and 186 to 206 (AAIA…YDAF).

Belongs to the chemokine-like factor family. As to expression, highly expressed in the brain.

The protein localises to the membrane. This chain is CKLF-like MARVEL transmembrane domain-containing protein 5 (CMTM5), found in Homo sapiens (Human).